The chain runs to 141 residues: Endoribonuclease YbeY (141 aa).

3 residues coordinate Zn(2+): histidine 107, histidine 111, and histidine 117.

This sequence belongs to the endoribonuclease YbeY family. Requires Zn(2+) as cofactor.

It localises to the cytoplasm. Single strand-specific metallo-endoribonuclease involved in late-stage 70S ribosome quality control and in maturation of the 3' terminus of the 16S rRNA. The sequence is that of Endoribonuclease YbeY from Leptospira interrogans serogroup Icterohaemorrhagiae serovar Lai (strain 56601).